The chain runs to 76 residues: MYLPLLLFCVISCYGEQINNLDDLQAKLDSMPPSDFIDHNGHNICQDCDRLCPLISDNPTCEEDCYGRCNKGITRQ.

Positions 1 to 15 are cleaved as a signal peptide; that stretch reads MYLPLLLFCVISCYG.

This is an uncharacterized protein from Magallana gigas (Pacific oyster).